We begin with the raw amino-acid sequence, 167 residues long: MNYTGYLLAFQLCIILGSSSCYCQADLFKEKYKLRNIFNASDSDVADGGLFLDILKNWKEESDKKIIQSQIVSVYFKIFDNLKDNQIIQKSMATIKEDLIAKFFNSSSSKLNDFPQKLIRTPVNDLKVQRKAVNELFKVMNXDLSPKSNLRKRKRSQSTFHGRRASI.

Residues 1-23 (MNYTGYLLAFQLCIILGSSSCYC) form the signal peptide. A Pyrrolidone carboxylic acid modification is found at Gln24. 2 N-linked (GlcNAc...) asparagine glycosylation sites follow: Asn39 and Asn105. The disordered stretch occupies residues 148–167 (SNLRKRKRSQSTFHGRRASI). The span at 149 to 167 (NLRKRKRSQSTFHGRRASI) shows a compositional bias: basic residues.

This sequence belongs to the type II (or gamma) interferon family. Homodimer. Interacts with IFNGR1 (via extracellular domain); this interaction promotes IFNGR1 dimerization. Released primarily from activated T lymphocytes.

Its subcellular location is the secreted. Functionally, type II interferon produced by immune cells such as T-cells and NK cells that plays crucial roles in antimicrobial, antiviral, and antitumor responses by activating effector immune cells and enhancing antigen presentation. Primarily signals through the JAK-STAT pathway after interaction with its receptor IFNGR1 to affect gene regulation. Upon IFNG binding, IFNGR1 intracellular domain opens out to allow association of downstream signaling components JAK2, JAK1 and STAT1, leading to STAT1 activation, nuclear translocation and transcription of IFNG-regulated genes. Many of the induced genes are transcription factors such as IRF1 that are able to further drive regulation of a next wave of transcription. Plays a role in class I antigen presentation pathway by inducing a replacement of catalytic proteasome subunits with immunoproteasome subunits. In turn, increases the quantity, quality, and repertoire of peptides for class I MHC loading. Increases the efficiency of peptide generation also by inducing the expression of activator PA28 that associates with the proteasome and alters its proteolytic cleavage preference. Up-regulates as well MHC II complexes on the cell surface by promoting expression of several key molecules such as cathepsins B/CTSB, H/CTSH, and L/CTSL. Participates in the regulation of hematopoietic stem cells during development and under homeostatic conditions by affecting their development, quiescence, and differentiation. The protein is Interferon gamma (IFNG) of Dasypus novemcinctus (Nine-banded armadillo).